Consider the following 150-residue polypeptide: Retinal rod rhodopsin-sensitive cGMP 3',5'-cyclic phosphodiesterase subunit delta (150 aa).

Residues 144–150 are required for association with membranes; it reads RVRLFYV.

It belongs to the PDE6D/unc-119 family. As to quaternary structure, interacts with the prenylated catalytic subunits of PDE6, an oligomer composed of two catalytic chains (PDE6A and PDE6B) and two inhibitory chains (gamma); has no effect on enzyme activity but promotes the release of the prenylated enzyme from cell membrane. Interacts with prenylated GRK1 and GRK7. Interacts with prenylated Ras family members, including RAP2A and RAP2C. Interacts with prenylated RHEB and NRAS. Interacts with prenylated HRAS and KRAS. Interacts with RAB13 (prenylated form); dissociates RAB13 from membranes. Interacts with prenylated INPP5E. Interacts with RAB28 (prenylated form); the interaction promotes RAB28 delivery to the photoreceptor outer segments. Interacts with RPGR. Interacts with ARL2. Interacts with ARL3; the interaction occurs specifically with the GTP-bound form of ARL3. Interaction with ARL2 and ARL3 promotes release of farnesylated cargo proteins. As to expression, widely expressed. Detected in various tissues including spleen, prostate gland, testis, ovary, small intestine, colon, retina, and peripheral blood.

It is found in the cytoplasm. The protein localises to the cytosol. Its subcellular location is the cytoplasmic vesicle membrane. The protein resides in the cytoskeleton. It localises to the cilium basal body. Promotes the release of prenylated target proteins from cellular membranes. Modulates the activity of prenylated or palmitoylated Ras family members by regulating their subcellular location. Required for normal ciliary targeting of farnesylated target proteins, such as INPP5E. Required for RAB28 localization to the cone cell outer segments in the retina. Modulates the subcellular location of target proteins by acting as a GTP specific dissociation inhibitor (GDI). Increases the affinity of ARL3 for GTP by several orders of magnitude. Stabilizes ARL3-GTP by decreasing the nucleotide dissociation rate. The chain is Retinal rod rhodopsin-sensitive cGMP 3',5'-cyclic phosphodiesterase subunit delta (PDE6D) from Homo sapiens (Human).